Here is a 163-residue protein sequence, read N- to C-terminus: Transcriptional repressor NrdR (163 aa).

Residues 3-34 (CPKCNYLKSSVVDSRQAEEGNTIRRRRECENC) fold into a zinc finger. The 91-residue stretch at 49–139 (LLVVKKDGTR…VYRSFKDVDE (91 aa)) folds into the ATP-cone domain.

Belongs to the NrdR family. The cofactor is Zn(2+).

In terms of biological role, negatively regulates transcription of bacterial ribonucleotide reductase nrd genes and operons by binding to NrdR-boxes. The sequence is that of Transcriptional repressor NrdR from Streptococcus mutans serotype c (strain ATCC 700610 / UA159).